An 83-amino-acid polypeptide reads, in one-letter code: Kappa-actitoxin-Aer3a (83 aa).

The first 22 residues, 1-22, serve as a signal peptide directing secretion; it reads MKGQMIICLVLIALCMSVVVMA. A propeptide spanning residues 23–49 is cleaved from the precursor; sequence QNLRAEELEKANPKDERVRSFERNQKR. In terms of domain architecture, ShKT spans 51–83; the sequence is CKDYLPKSECTQFRCRTSMKYKYTNCKKTCGTC. Cystine bridges form between Cys-51-Cys-83, Cys-60-Cys-76, and Cys-65-Cys-80.

It belongs to the sea anemone type 1 potassium channel toxin family. Type 1a subfamily.

The protein localises to the secreted. The protein resides in the nematocyst. Its function is as follows. Specifically, dose-dependently and potently blocks the voltage-gated potassium channel Kv1.1/KCNA1 (Ki=1.6 pM). Moderately blocks potassium channel heterotetramers formed by 3 subunits of Kv1.1/KCNA1 and 1 subunit of Kv1.2/KCNA2 (Ki=56 nM) and weakly blocks those formed by 2 subunits of Kv1.1/KCNA1 and 2 subunits of Kv1.2/KCNA2 (Ki=14 nM). The sequence is that of Kappa-actitoxin-Aer3a from Anemonia erythraea (Sea anemone).